Here is a 231-residue protein sequence, read N- to C-terminus: Potassium/proton antiporter CemA (231 aa).

The next 3 helical transmembrane spans lie at 9 to 29 (FIPL…SFLF), 116 to 136 (IICF…LIIL), and 191 to 211 (IISG…KYWI).

Belongs to the CemA family.

It localises to the plastid. Its subcellular location is the chloroplast inner membrane. It catalyses the reaction K(+)(in) + H(+)(out) = K(+)(out) + H(+)(in). In terms of biological role, contributes to K(+)/H(+) antiport activity by supporting proton efflux to control proton extrusion and homeostasis in chloroplasts in a light-dependent manner to modulate photosynthesis. Prevents excessive induction of non-photochemical quenching (NPQ) under continuous-light conditions. Indirectly promotes efficient inorganic carbon uptake into chloroplasts. This is Potassium/proton antiporter CemA from Manihot esculenta (Cassava).